Here is a 78-residue protein sequence, read N- to C-terminus: U7-lycotoxin-Ls1d (78 aa).

The N-terminal stretch at 1–22 (MKLIIFTGLALLLIVSLIDVEA) is a signal peptide. The propeptide occupies 23–26 (QNEG).

The protein belongs to the neurotoxin 19 (CSTX) family. 07 (U7-Lctx) subfamily. In terms of processing, contains 4 disulfide bonds. As to expression, expressed by the venom gland.

The protein resides in the secreted. This Lycosa singoriensis (Wolf spider) protein is U7-lycotoxin-Ls1d.